We begin with the raw amino-acid sequence, 900 residues long: 3'-5' exonuclease DinG (900 aa).

Residues 8–161 (VVDLETTGNQ…DEDAATTAQL (154 aa)) form the Exonuclease domain. Residues 241–496 (TLVTKELGLT…KSIDLLEQQR (256 aa)) form the Helicase ATP-binding domain. 276 to 283 (APLGSGKS) provides a ligand contact to ATP. Positions 448 to 451 (DEAH) match the DEAH box motif. The Helicase C-terminal domain occupies 714-883 (YVIEYVSVVE…RYRQKKGDIK (170 aa)).

The protein belongs to the helicase family. DinG subfamily. Type 2 sub-subfamily.

Its function is as follows. 3'-5' exonuclease. This Staphylococcus saprophyticus subsp. saprophyticus (strain ATCC 15305 / DSM 20229 / NCIMB 8711 / NCTC 7292 / S-41) protein is 3'-5' exonuclease DinG.